A 364-amino-acid chain; its full sequence is Alanine racemase (364 aa).

Catalysis depends on Lys35, which acts as the Proton acceptor; specific for D-alanine. The residue at position 35 (Lys35) is an N6-(pyridoxal phosphate)lysine. Arg132 lines the substrate pocket. Residue Tyr260 is the Proton acceptor; specific for L-alanine of the active site. A substrate-binding site is contributed by Met308.

It belongs to the alanine racemase family. Pyridoxal 5'-phosphate is required as a cofactor.

It catalyses the reaction L-alanine = D-alanine. Its pathway is amino-acid biosynthesis; D-alanine biosynthesis; D-alanine from L-alanine: step 1/1. Catalyzes the interconversion of L-alanine and D-alanine. May also act on other amino acids. The polypeptide is Alanine racemase (alr) (Acidithiobacillus ferrooxidans (strain ATCC 23270 / DSM 14882 / CIP 104768 / NCIMB 8455) (Ferrobacillus ferrooxidans (strain ATCC 23270))).